The following is a 157-amino-acid chain: 6,7-dimethyl-8-ribityllumazine synthase (157 aa).

Residues phenylalanine 22, 57–59 (AYE), and 81–83 (TVI) each bind 5-amino-6-(D-ribitylamino)uracil. (2S)-2-hydroxy-3-oxobutyl phosphate is bound at residue 86 to 87 (GT). The active-site Proton donor is histidine 89. Phenylalanine 114 provides a ligand contact to 5-amino-6-(D-ribitylamino)uracil. Position 128 (arginine 128) interacts with (2S)-2-hydroxy-3-oxobutyl phosphate.

The protein belongs to the DMRL synthase family. In terms of assembly, forms an icosahedral capsid composed of 60 subunits, arranged as a dodecamer of pentamers.

It carries out the reaction (2S)-2-hydroxy-3-oxobutyl phosphate + 5-amino-6-(D-ribitylamino)uracil = 6,7-dimethyl-8-(1-D-ribityl)lumazine + phosphate + 2 H2O + H(+). It participates in cofactor biosynthesis; riboflavin biosynthesis; riboflavin from 2-hydroxy-3-oxobutyl phosphate and 5-amino-6-(D-ribitylamino)uracil: step 1/2. Functionally, catalyzes the formation of 6,7-dimethyl-8-ribityllumazine by condensation of 5-amino-6-(D-ribitylamino)uracil with 3,4-dihydroxy-2-butanone 4-phosphate. This is the penultimate step in the biosynthesis of riboflavin. The sequence is that of 6,7-dimethyl-8-ribityllumazine synthase from Haemophilus influenzae (strain 86-028NP).